The primary structure comprises 139 residues: Protein archease (139 aa).

The Ca(2+) site is built by Asp12, Asp138, and Ile139.

It belongs to the archease family.

In terms of biological role, activates the tRNA-splicing ligase complex by facilitating the enzymatic turnover of catalytic subunit RtcB. Acts by promoting the guanylylation of RtcB, a key intermediate step in tRNA ligation. Can also alter the NTP specificity of RtcB such that ATP, dGTP or ITP is used efficiently. This is Protein archease from Saccharolobus islandicus (strain M.16.27) (Sulfolobus islandicus).